We begin with the raw amino-acid sequence, 469 residues long: Rubisco accumulation factor 1, chloroplastic (469 aa).

Residues 1 to 46 (MLSLSHPHPHPASTTAAAAARHHHRRNAPFAPHHRRRRRFAHLTTS) constitute a chloroplast transit peptide. Residues 1-78 (MLSLSHPHPH…TPPPTAPPDQ (78 aa)) form a disordered region. The span at 20-41 (ARHHHRRNAPFAPHHRRRRRFA) shows a compositional bias: basic residues. Residues 90 to 281 (LPDKYKDLDL…PARARVEAEL (192 aa)) are N-terminal alpha-helix. Residues 246–294 (RQSREAIDAEDSVAELERALEVVDTEPARARVEAELDRARRKAAGEEVD) are a coiled coil. Residues 311-456 (VPVVRLMYGE…AEVLVVVRPP (146 aa)) form a C-terminal beta sheet region.

The protein belongs to the RAF family.

It localises to the plastid. The protein localises to the chloroplast. Required for assembly or stability of RuBisCO. Acts at a postchaperonin step to fold and/or assemble the large subunit (LS) into RuBisCO. The polypeptide is Rubisco accumulation factor 1, chloroplastic (RAF1) (Oryza sativa subsp. japonica (Rice)).